A 342-amino-acid chain; its full sequence is Dihydroorotase (342 aa).

Zn(2+) is bound by residues His-13 and His-15. Residues 15–17 (HLR) and Asn-41 contribute to the substrate site. Lys-98, His-135, and His-173 together coordinate Zn(2+). At Lys-98 the chain carries N6-carboxylysine. His-135 lines the substrate pocket. Leu-218 is a substrate binding site. Asp-246 serves as a coordination point for Zn(2+). Asp-246 is a catalytic residue. 2 residues coordinate substrate: His-250 and Ala-262.

This sequence belongs to the metallo-dependent hydrolases superfamily. DHOase family. Class II DHOase subfamily. Homodimer. It depends on Zn(2+) as a cofactor.

The enzyme catalyses (S)-dihydroorotate + H2O = N-carbamoyl-L-aspartate + H(+). It functions in the pathway pyrimidine metabolism; UMP biosynthesis via de novo pathway; (S)-dihydroorotate from bicarbonate: step 3/3. Functionally, catalyzes the reversible cyclization of carbamoyl aspartate to dihydroorotate. This is Dihydroorotase from Photobacterium profundum (strain SS9).